Consider the following 357-residue polypeptide: CD4+ T-cell-stimulating antigen (357 aa).

Residues 1 to 22 (MKKRTFALALSMIIASGVILGA) form the signal peptide. The N-palmitoyl cysteine moiety is linked to residue Cys23. Residue Cys23 is the site of S-diacylglycerol cysteine attachment.

This sequence belongs to the BMP lipoprotein family.

Its subcellular location is the cell membrane. In Listeria monocytogenes serovar 1/2a (strain ATCC BAA-679 / EGD-e), this protein is CD4+ T-cell-stimulating antigen (tcsA).